The sequence spans 1080 residues: Ubiquitin carboxyl-terminal hydrolase 8 (1080 aa).

The region spanning 33–116 is the MIT domain; sequence TKNYIHSAQK…ESLKLRYEEA (84 aa). Residues 119-173 are compositionally biased toward basic and acidic residues; that stretch reads RKQLEEKDRREEEQLQQQKRQEMGREDSGAAAKRSVENLLDSKTKTQRINGEKSE. The segment at 119–176 is disordered; sequence RKQLEEKDRREEEQLQQQKRQEMGREDSGAAAKRSVENLLDSKTKTQRINGEKSEGAA. Ser-160 is subject to Phosphoserine. Positions 195 to 313 constitute a Rhodanese domain; it reads KNTSLIIMDA…WLLCYPQFTT (119 aa). Positions 379 to 393 are enriched in low complexity; sequence ALAGPGAAPRAEASP. Disordered stretches follow at residues 379 to 455, 468 to 605, and 642 to 710; these read ALAG…TDEE, EKNK…RSEE, and PPEM…KPPC. Residue Ser-392 is modified to Phosphoserine. The SH3-binding signature appears at 405-413; it reads PQVDRTKKP. Positions 417 to 427 are enriched in basic and acidic residues; that stretch reads LPEDHRIKSEN. Ser-446 is subject to Phosphoserine. Basic and acidic residues-rich tracts occupy residues 468–535, 549–577, and 593–605; these read EKNK…RELS, SKSE…KRPA, and AQRE…RSEE. The residue at position 569 (Thr-569) is a Phosphothreonine. A compositionally biased stretch (polar residues) spans 678-688; that stretch reads SYSSPDITQAL. Phosphoserine is present on residues Ser-680 and Ser-681. The 333-residue stretch at 739 to 1071 folds into the USP domain; sequence TGLRNLGNTC…AAYILFYTSL (333 aa). Residue Cys-748 is the Nucleophile of the active site. A Phosphothreonine modification is found at Thr-907. His-1029 functions as the Proton acceptor in the catalytic mechanism.

This sequence belongs to the peptidase C19 family. As to quaternary structure, forms a ternary complex with RNF128 and OTUB1. Interacts (via C-terminal UCH catalytic domain) with OTUB1 isoform 1. Interacts with STAM2 (via SH3 domain). Interacts with DNAJB3, EGFR, EPS15, RASGRF1, RNF41, YWHAE, YWHAG and YWHAZ. Interacts with NBR1, RASGRF1, RNF41 and IST1. Associates with the ESCRT-0 complex and with microtubules. Interacts with BIRC6/bruce and KIF23/MKLP1. In terms of processing, phosphorylation of Ser-680 is essential for interaction with YWHAE and for cytosol localization. Undergoes dephosphorylation at Ser-680 in the M phase. Tyrosine-phosphorylated in its N-terminal half in an EGFR-dependent manner. Ubiquitinated. Inactive form is mostly monoubiquitinated, but polyubiquitination happens too. Ubiquitination is increased in EGF-stimulated cells. Ubiquitination of active form is undetectable, suggesting a possibility that USP8 deubiquitinates itself, thereby regulating its own function. In terms of tissue distribution, highly expressed in testis. Expressed at intermediate level in brain.

It is found in the cytoplasm. It localises to the nucleus. The protein localises to the endosome membrane. The protein resides in the cell membrane. The enzyme catalyses Thiol-dependent hydrolysis of ester, thioester, amide, peptide and isopeptide bonds formed by the C-terminal Gly of ubiquitin (a 76-residue protein attached to proteins as an intracellular targeting signal).. Its function is as follows. Hydrolase that can remove conjugated ubiquitin from proteins and therefore plays an important regulatory role at the level of protein turnover by preventing degradation. Converts both 'Lys-48' an 'Lys-63'-linked ubiquitin chains. Catalytic activity is enhanced in the M phase. Involved in cell proliferation. Required to enter into S phase in response to serum stimulation. May regulate T-cell anergy mediated by RNF128 via the formation of a complex containing RNF128 and OTUB1. Probably regulates the stability of STAM2 and RASGRF1. Regulates endosomal ubiquitin dynamics, cargo sorting, membrane traffic at early endosomes, and maintenance of ESCRT-0 stability. The level of protein ubiquitination on endosomes is essential for maintaining the morphology of the organelle. Deubiquitinates EPS15 and controls tyrosine kinase stability. Removes conjugated ubiquitin from EGFR thus regulating EGFR degradation and downstream MAPK signaling. Involved in acrosome biogenesis through interaction with the spermatid ESCRT-0 complex and microtubules. Deubiquitinates BIRC6/bruce and KIF23/MKLP1. Deubiquitinates BACE1 which inhibits BACE1 lysosomal degradation and modulates BACE-mediated APP cleavage and amyloid-beta formation. The chain is Ubiquitin carboxyl-terminal hydrolase 8 from Mus musculus (Mouse).